We begin with the raw amino-acid sequence, 460 residues long: Lipase member I (460 aa).

Residues 1–15 form the signal peptide; that stretch reads MRVYIFLCLMCWVRS. Asn63 carries an N-linked (GlcNAc...) asparagine glycan. The Nucleophile role is filled by Ser159. Asp183 functions as the Charge relay system in the catalytic mechanism. An intrachain disulfide couples Cys238 to Cys251. His253 acts as the Charge relay system in catalysis. 2 disulfide bridges follow: Cys275/Cys286 and Cys289/Cys297. Asn396 carries N-linked (GlcNAc...) asparagine glycosylation. Cys436 and Cys455 are oxidised to a cystine.

It belongs to the AB hydrolase superfamily. Lipase family. As to quaternary structure, interacts with heparin with a high affinity. Expressed in testis. Expressed exclusively at the connecting piece of the sperm.

Its subcellular location is the cell membrane. The protein resides in the secreted. It carries out the reaction 1-hexadecanoyl-2-(9Z-octadecenoyl)-sn-glycero-3-phosphate + H2O = 2-(9Z-octadecenoyl)-sn-glycero-3-phosphate + hexadecanoate + H(+). Inhibited by sodium vanadate. In terms of biological role, hydrolyzes specifically phosphatidic acid (PA) to produce 2-acyl lysophosphatidic acid (LPA; a potent bioactive lipid mediator) and fatty acid. Does not hydrolyze other phospholipids, like phosphatidylserine (PS), phosphatidylcholine (PC) and phosphatidylethanolamine (PE) or triacylglycerol (TG). The sequence is that of Lipase member I (LIPI) from Homo sapiens (Human).